The following is a 372-amino-acid chain: Queuine tRNA-ribosyltransferase (372 aa).

Residue aspartate 89 is the Proton acceptor of the active site. Substrate-binding positions include 89–93 (DSGGF), aspartate 143, glutamine 185, and glycine 212. An RNA binding region spans residues 243–249 (GVGKPED). The active-site Nucleophile is aspartate 262. The tract at residues 267–271 (TRNAR) is RNA binding; important for wobble base 34 recognition. Residues cysteine 300, cysteine 302, cysteine 305, and histidine 331 each coordinate Zn(2+).

The protein belongs to the queuine tRNA-ribosyltransferase family. As to quaternary structure, homodimer. Within each dimer, one monomer is responsible for RNA recognition and catalysis, while the other monomer binds to the replacement base PreQ1. It depends on Zn(2+) as a cofactor.

The enzyme catalyses 7-aminomethyl-7-carbaguanine + guanosine(34) in tRNA = 7-aminomethyl-7-carbaguanosine(34) in tRNA + guanine. Its pathway is tRNA modification; tRNA-queuosine biosynthesis. Catalyzes the base-exchange of a guanine (G) residue with the queuine precursor 7-aminomethyl-7-deazaguanine (PreQ1) at position 34 (anticodon wobble position) in tRNAs with GU(N) anticodons (tRNA-Asp, -Asn, -His and -Tyr). Catalysis occurs through a double-displacement mechanism. The nucleophile active site attacks the C1' of nucleotide 34 to detach the guanine base from the RNA, forming a covalent enzyme-RNA intermediate. The proton acceptor active site deprotonates the incoming PreQ1, allowing a nucleophilic attack on the C1' of the ribose to form the product. After dissociation, two additional enzymatic reactions on the tRNA convert PreQ1 to queuine (Q), resulting in the hypermodified nucleoside queuosine (7-(((4,5-cis-dihydroxy-2-cyclopenten-1-yl)amino)methyl)-7-deazaguanosine). The chain is Queuine tRNA-ribosyltransferase from Chromohalobacter salexigens (strain ATCC BAA-138 / DSM 3043 / CIP 106854 / NCIMB 13768 / 1H11).